The sequence spans 79 residues: MLVLARRSNQSIMIGDDIEIVIVDIKGDQVKIGVKAPKNVSVHRAEVYKEIQEENKKAAGTNIKPEDLGKLGDLFKKKT.

The protein belongs to the CsrA/RsmA family. In terms of assembly, homodimer; the beta-strands of each monomer intercalate to form a hydrophobic core, while the alpha-helices form wings that extend away from the core.

It is found in the cytoplasm. Functionally, a translational regulator that binds mRNA to regulate translation initiation and/or mRNA stability. Usually binds in the 5'-UTR at or near the Shine-Dalgarno sequence preventing ribosome-binding, thus repressing translation. Its main target seems to be the major flagellin gene, while its function is anatagonized by FliW. The chain is Translational regulator CsrA from Leptospira biflexa serovar Patoc (strain Patoc 1 / Ames).